The primary structure comprises 187 residues: Macro domain-containing protein MM_0177 (187 aa).

One can recognise a Macro domain in the interval 8–187 (VEEGIRMELN…SIKKALSKIL (180 aa)).

Belongs to the MacroD-type family.

The protein is Macro domain-containing protein MM_0177 of Methanosarcina mazei (strain ATCC BAA-159 / DSM 3647 / Goe1 / Go1 / JCM 11833 / OCM 88) (Methanosarcina frisia).